A 465-amino-acid chain; its full sequence is Gamma-aminobutyric acid receptor subunit rho-2 (465 aa).

An N-terminal signal peptide occupies residues 1–20 (MPYFMRLALFLFCLMALVES). The Extracellular segment spans residues 21-260 (RKPRRKRWTG…LYINFTLRRH (240 aa)). 4-aminobutanoate is bound at residue Arg105. N-linked (GlcNAc...) asparagine glycosylation occurs at Asn120. Ser169 contacts 4-aminobutanoate. An intrachain disulfide couples Cys178 to Cys192. Glu197 contacts 4-aminobutanoate. N-linked (GlcNAc...) asparagine glycosylation is present at Asn254. A helical transmembrane segment spans residues 261–281 (IFFFLLQTYFPATLMVMLSWV). Topologically, residues 282 to 293 (SFWIDHRAVPAR) are cytoplasmic. The helical transmembrane segment at 294–314 (VSLGIMTVLTMSTIITGVNAS) threads the bilayer. The Extracellular portion of the chain corresponds to 315-325 (MPRVSYIRAVD). A helical transmembrane segment spans residues 326 to 346 (IYLWVSFVFVFLSVLEYAAVN). Over 347–443 (YLTTVQEQKE…IFQNTHAIDK (97 aa)) the chain is Cytoplasmic. A helical membrane pass occupies residues 444–464 (YSRLIFPAFYIVFNLIYWSVF). Residue Ser465 is a topological domain, extracellular.

It belongs to the ligand-gated ion channel (TC 1.A.9) family. Gamma-aminobutyric acid receptor (TC 1.A.9.5) subfamily. GABRR2 sub-subfamily. In terms of assembly, three rho subunits (rho-1/GBRR1, rho-2/GBRR2 and rho-3/GBRR3) coassemble either to form functional homopentamers or heteropentamers. Rho-2 is unable to form a functional homopentamer. Interacts with SQSTM1. Expressed in spinal cord and in cerebellum. Expressed in retina.

The protein resides in the postsynaptic cell membrane. It is found in the cell membrane. It carries out the reaction chloride(in) = chloride(out). In contrast with rho-1 and rho-3 homopentamers, rho-2 GABAARs are not inhibited by picrotoxin. Functionally, rho subunit of the pentameric ligand-gated chloride channels responsible for mediating the effects of gamma-aminobutyric acid (GABA), the major inhibitory neurotransmitter in the brain. Rho-containing GABA-gated chloride channels are a subclass of GABA(A) receptors (GABAARs) entirely composed of rho subunits, where GABA molecules bind at the rho intersubunit interfaces. When activated by GABA, rho-GABAARs selectively allow the flow of chloride anions across the cell membrane down their electrochemical gradient. Rho-2 GABAARs may contribute to the regulation of glial development in the cerebellum by controlling extrasynaptic transmission. Rho-2 GABAARs are also involved in neuronal tonic (extrasynaptic) and phasic (synaptic) transmission in the Purkinje neurons of the cerebellum. Rho-2 GABAARs expressed in retina may play a role in retinal neurotransmission. The sequence is that of Gamma-aminobutyric acid receptor subunit rho-2 from Rattus norvegicus (Rat).